A 127-amino-acid polypeptide reads, in one-letter code: F420-non-reducing hydrogenase subunit G (127 aa).

The protein belongs to the [NiFe]/[NiFeSe] hydrogenase small subunit family. As to quaternary structure, the F420-non-reducing hydrogenase is composed of three subunits; MvhA, MvhD and MvhG. It forms a complex with the heterodisulfide reductase (hdr).

In terms of biological role, part of a complex that provides reducing equivalents for heterodisulfide reductase. The sequence is that of F420-non-reducing hydrogenase subunit G (mvhG) from Methanothermus fervidus.